Here is a 235-residue protein sequence, read N- to C-terminus: Small ribosomal subunit protein uS3 (235 aa).

One can recognise a KH type-2 domain in the interval 39–107 (VRKFLNKELM…PAQINIAEVK (69 aa)).

The protein belongs to the universal ribosomal protein uS3 family. In terms of assembly, part of the 30S ribosomal subunit. Forms a tight complex with proteins S10 and S14.

Its function is as follows. Binds the lower part of the 30S subunit head. Binds mRNA in the 70S ribosome, positioning it for translation. In Actinobacillus succinogenes (strain ATCC 55618 / DSM 22257 / CCUG 43843 / 130Z), this protein is Small ribosomal subunit protein uS3.